The following is a 454-amino-acid chain: Zinc finger CCCH domain-containing protein 66 (454 aa).

Residues 1–23 (MAAGAGAGGGGGEGDSNGGGTSP) show a composition bias toward gly residues. Residues 1–30 (MAAGAGAGGGGGEGDSNGGGTSPGGVSAAA) form a disordered region. C3H1-type zinc fingers lie at residues 66–94 (RIGE…HPPN), 111–139 (RVGQ…HPRE), 157–185 (RPNE…HPQP), 318–346 (RPDQ…HPKE), and 364–392 (RPGE…HPMG). The disordered stretch occupies residues 405-454 (DVSSMHYQLSPSPGHPGILLDGGSGRSHRVPQSDSQQIPSGDGNAEREAS). Positions 434-443 (VPQSDSQQIP) are enriched in polar residues.

The sequence is that of Zinc finger CCCH domain-containing protein 66 from Oryza sativa subsp. japonica (Rice).